A 498-amino-acid polypeptide reads, in one-letter code: Resveratrol cleavage oxygenase 1 (498 aa).

2 residues coordinate piceatannol: Tyr105 and Lys136. The trans-resveratrol site is built by Tyr105 and Lys136. Residues His169, His220, and His285 each coordinate Fe cation. Residue Glu355 coordinates piceatannol. Trans-resveratrol is bound at residue Glu355. A Fe cation-binding site is contributed by His481.

This sequence belongs to the carotenoid oxygenase family. The cofactor is Fe(2+).

It catalyses the reaction trans-resveratrol + O2 = 3,5-dihydroxybenzaldehyde + 4-hydroxybenzaldehyde. It carries out the reaction piceatannol + O2 = 3,5-dihydroxybenzaldehyde + 3,4-dihydroxybenzaldehyde. Functionally, dioxygenase that cleaves the interphenyl C-alpha-C-beta double bond of resveratrol to yield 3,5-dihydroxybenzaldehyde and 4-hydroxybenzaldehyde. Also cleaves piceatannol, a compound that differs from resveratrol only in the occurrence of an additional hydroxyl group, which leads to the production of 3,4-dihydroxybenzaldehyde and 3,5-hydroxybenzaldehyde. This chain is Resveratrol cleavage oxygenase 1, found in Aspergillus fumigatus (strain ATCC MYA-4609 / CBS 101355 / FGSC A1100 / Af293) (Neosartorya fumigata).